The chain runs to 144 residues: Superoxide dismutase [Mn], mitochondrial (144 aa).

Mn(2+) contacts are provided by histidine 10, histidine 58, and aspartate 143.

The protein belongs to the iron/manganese superoxide dismutase family. Homotetramer. The cofactor is Mn(2+).

The protein resides in the mitochondrion matrix. The enzyme catalyses 2 superoxide + 2 H(+) = H2O2 + O2. Destroys superoxide anion radicals which are normally produced within the cells and which are toxic to biological systems. This chain is Superoxide dismutase [Mn], mitochondrial, found in Branchiostoma floridae (Florida lancelet).